We begin with the raw amino-acid sequence, 329 residues long: uncharacterized protein (329 aa).

The interval Met1–Ser20 is disordered.

This is an uncharacterized protein from Mycobacterium tuberculosis (strain CDC 1551 / Oshkosh).